Consider the following 539-residue polypeptide: Putative cysteine ligase BshC (539 aa).

The stretch at 249-270 (VETNDEVTNRLNESQAAMKRAG) forms a coiled coil.

This sequence belongs to the BshC family.

Its function is as follows. Involved in bacillithiol (BSH) biosynthesis. May catalyze the last step of the pathway, the addition of cysteine to glucosamine malate (GlcN-Mal) to generate BSH. The polypeptide is Putative cysteine ligase BshC (Bacillus pumilus (strain SAFR-032)).